The chain runs to 957 residues: Glycine dehydrogenase (decarboxylating) (957 aa).

Lys708 carries the post-translational modification N6-(pyridoxal phosphate)lysine.

It belongs to the GcvP family. As to quaternary structure, the glycine cleavage system is composed of four proteins: P, T, L and H. The cofactor is pyridoxal 5'-phosphate.

The catalysed reaction is N(6)-[(R)-lipoyl]-L-lysyl-[glycine-cleavage complex H protein] + glycine + H(+) = N(6)-[(R)-S(8)-aminomethyldihydrolipoyl]-L-lysyl-[glycine-cleavage complex H protein] + CO2. In terms of biological role, the glycine cleavage system catalyzes the degradation of glycine. The P protein binds the alpha-amino group of glycine through its pyridoxal phosphate cofactor; CO(2) is released and the remaining methylamine moiety is then transferred to the lipoamide cofactor of the H protein. This is Glycine dehydrogenase (decarboxylating) from Salmonella dublin (strain CT_02021853).